The chain runs to 147 residues: Protein phosphatase 1 regulatory subunit 14A (147 aa).

The span at Met1–Leu11 shows a compositional bias: basic residues. Residues Met1 to Val37 are disordered. Ser26 carries the phosphoserine modification. The segment at Ala35 to Lys120 is inhibitory. A Phosphothreonine modification is found at Thr38. A disordered region spans residues Leu118 to Pro147. Phosphoserine is present on residues Ser128, Ser134, and Ser136.

It belongs to the PP1 inhibitor family.

It is found in the cytoplasm. Functionally, inhibitor of PPP1CA. Has over 1000-fold higher inhibitory activity when phosphorylated, creating a molecular switch for regulating the phosphorylation status of PPP1CA substrates and smooth muscle contraction. The polypeptide is Protein phosphatase 1 regulatory subunit 14A (Ppp1r14a) (Rattus norvegicus (Rat)).